Reading from the N-terminus, the 378-residue chain is Anhydro-N-acetylmuramic acid kinase (378 aa).

Residue 9 to 16 participates in ATP binding; that stretch reads GTSADGID.

It belongs to the anhydro-N-acetylmuramic acid kinase family.

It catalyses the reaction 1,6-anhydro-N-acetyl-beta-muramate + ATP + H2O = N-acetyl-D-muramate 6-phosphate + ADP + H(+). The protein operates within amino-sugar metabolism; 1,6-anhydro-N-acetylmuramate degradation. Its pathway is cell wall biogenesis; peptidoglycan recycling. Functionally, catalyzes the specific phosphorylation of 1,6-anhydro-N-acetylmuramic acid (anhMurNAc) with the simultaneous cleavage of the 1,6-anhydro ring, generating MurNAc-6-P. Is required for the utilization of anhMurNAc either imported from the medium or derived from its own cell wall murein, and thus plays a role in cell wall recycling. The chain is Anhydro-N-acetylmuramic acid kinase from Synechococcus sp. (strain ATCC 27144 / PCC 6301 / SAUG 1402/1) (Anacystis nidulans).